Reading from the N-terminus, the 330-residue chain is uncharacterized protein (330 aa).

This is an uncharacterized protein from Schizosaccharomyces pombe (strain 972 / ATCC 24843) (Fission yeast).